A 1054-amino-acid chain; its full sequence is NACHT, LRR and PYD domains-containing protein 12 (1054 aa).

Residues 1–95 (MLPSTARDGL…WERGQGEDLV (95 aa)) enclose the Pyrin domain. In terms of domain architecture, FISNA spans 129 to 201 (YKDYVRRKFQ…SPIQMETLFE (73 aa)). One can recognise an NACHT domain in the interval 211 to 528 (HTVVLQGAAG…EFFAAMYCAL (318 aa)). 217–224 (GAAGMGKS) lines the ATP pocket. LRR repeat units follow at residues 821-841 (YLVE…KLLC), 850-871 (RLRT…DLAS), 878-899 (SLLE…LLCE), 907-928 (KLQT…GIAS), 935-955 (CLQE…QLLG), 964-985 (RLQK…DLSS), 992-1013 (TLHE…LLCK), and 1021-1042 (KLRV…RMAA).

Belongs to the NLRP family. Interacts (via pyrin domain) with ASC. Interacts (via pyrin domain) with FAF1 (via UBA domain). Interacts with MAP3K14; this interaction promotes proteasomal degradation of MAP3K14. Interacts with NOD2; this interaction promotes degradation of NOD2 through the ubiquitin-proteasome pathway. Interacts with HSPA1A and HSPA8. Interacts with HSP90AA1. Interacts with TRIM25; this interaction inhibits RIGI-mediated signaling pathway. In terms of tissue distribution, mainly expressed in dendritic cells (DCs) and neutrophils.

The protein resides in the cytoplasm. In terms of biological role, plays an essential role as an potent mitigator of inflammation. Primarily expressed in dendritic cells and macrophages, inhibits both canonical and non-canonical NF-kappa-B and ERK activation pathways. Functions as a negative regulator of NOD2 by targeting it to degradation via the proteasome pathway. In turn, promotes bacterial tolerance. Also inhibits the RIGI-mediated immune signaling against RNA viruses by reducing the E3 ubiquitin ligase TRIM25-mediated 'Lys-63'-linked RIGI activation but enhancing the E3 ubiquitin ligase RNF125-mediated 'Lys-48'-linked RIGI degradation. Also acts as a negative regulator of inflammatory response to mitigate obesity and obesity-associated diseases in adipose tissue. This chain is NACHT, LRR and PYD domains-containing protein 12 (Nlrp12), found in Mus musculus (Mouse).